The sequence spans 226 residues: Large ribosomal subunit protein uL1 (226 aa).

Belongs to the universal ribosomal protein uL1 family. As to quaternary structure, part of the 50S ribosomal subunit.

Binds directly to 23S rRNA. The L1 stalk is quite mobile in the ribosome, and is involved in E site tRNA release. In terms of biological role, protein L1 is also a translational repressor protein, it controls the translation of the L11 operon by binding to its mRNA. This is Large ribosomal subunit protein uL1 from Borreliella afzelii (strain PKo) (Borrelia afzelii).